The chain runs to 325 residues: Tetraacyldisaccharide 4'-kinase (325 aa).

51–58 serves as a coordination point for ATP; the sequence is VVGGAGKT.

The protein belongs to the LpxK family.

The enzyme catalyses a lipid A disaccharide + ATP = a lipid IVA + ADP + H(+). It participates in glycolipid biosynthesis; lipid IV(A) biosynthesis; lipid IV(A) from (3R)-3-hydroxytetradecanoyl-[acyl-carrier-protein] and UDP-N-acetyl-alpha-D-glucosamine: step 6/6. In terms of biological role, transfers the gamma-phosphate of ATP to the 4'-position of a tetraacyldisaccharide 1-phosphate intermediate (termed DS-1-P) to form tetraacyldisaccharide 1,4'-bis-phosphate (lipid IVA). In Paramagnetospirillum magneticum (strain ATCC 700264 / AMB-1) (Magnetospirillum magneticum), this protein is Tetraacyldisaccharide 4'-kinase.